We begin with the raw amino-acid sequence, 897 residues long: N-terminal acetyltransferase A complex auxiliary subunit NAA15 (897 aa).

TPR repeat units lie at residues 77–110 (HVCWHVLGLLYRSDREYREAIKCYRNALRIDPDN), 111–144 (LEILRDLSLLQAQMRDLSGFVETRQQLLTLKPNH), 189–222 (TEMILYKVSLLEESGSFDKALEELHKKEPKIVDK), 223–256 (LSYKEQEVSLLSKVGRLEEANKLYRVLLSMNPDN), 298–331 (SSAVKRIPLDFLQDENFKEAVAKYIKPLLTKGVP), 380–413 (LWTLFFLAQHYDRRGQYDVALCKIDEAIAHTPTV), and 488–523 (QCMWYDLASGDSYFRQGDLGRALKKFLAVEKHYADI). 2 disordered regions span residues 578–640 (KSTA…DPHG) and 863–897 (SRKSNENGDTPNHPMGQTELSDGQLEAFKSLSVAT). The segment covering 602 to 617 (KAEARAKKEAESKSEE) has biased composition (basic and acidic residues). Positions 863–872 (SRKSNENGDT) are enriched in polar residues.

As to quaternary structure, part of the NatA complex. Associates with ribosomes. Interacts with NAA10. In terms of tissue distribution, expressed in leaves, roots, shoots and flowers.

Its function is as follows. Auxiliary subunit of the NatA N-alpha-acetyltransferase complex. Required for male gametocyte development, embryogenesis, suspensor development and the formation of the quiescent center (QC) in the root meristem. Involved in plant immunity through the regulation of SNC1 stability. Required for embryo development. This Arabidopsis thaliana (Mouse-ear cress) protein is N-terminal acetyltransferase A complex auxiliary subunit NAA15.